A 621-amino-acid polypeptide reads, in one-letter code: Transmembrane protein 200C (621 aa).

The disordered stretch occupies residues 12–37; sequence ARKQDPLRPPSQIPKRKRKAKKRRKN. A compositionally biased stretch (basic residues) spans 25–36; the sequence is PKRKRKAKKRRK. A helical membrane pass occupies residues 53 to 73; sequence GLIALCGILVLLVGIAMAVVG. Residues 80 to 147 form a disordered region; that stretch reads GTNREGGKQL…RAASPSSSST (68 aa). Low complexity predominate over residues 125 to 147; sequence SSSAGAPRSTPPARAASPSSSST. Residues 167-187 traverse the membrane as a helical segment; the sequence is VFGPLIMGIGIFLFICANAVL. Disordered regions lie at residues 284–315, 347–368, and 384–598; these read WPPH…PREP, ASSC…QSTA, and LQGG…FTNK. The segment covering 290-303 has biased composition (low complexity); it reads APSGGRPRGAASPP. Residues 405 to 418 show a composition bias toward basic and acidic residues; it reads PGERGSQEIPRGEL. The segment covering 479–490 has biased composition (pro residues); that stretch reads RAPPSPEPPPSP. Composition is skewed to low complexity over residues 491 to 505 and 523 to 533; these read GSAD…KAAS and GSSQSDDPSSS. Residues 586 to 595 are compositionally biased toward polar residues; it reads EQPQPVQRQF.

This sequence belongs to the TMEM200 family.

Its subcellular location is the membrane. In Homo sapiens (Human), this protein is Transmembrane protein 200C (TMEM200C).